The sequence spans 124 residues: Small ribosomal subunit protein uS13 (124 aa).

Positions 94-124 (GLPLRGQRTKNNSRTRKGKRKTVANKKKATK) are disordered. Basic residues predominate over residues 100–124 (QRTKNNSRTRKGKRKTVANKKKATK).

It belongs to the universal ribosomal protein uS13 family. As to quaternary structure, part of the 30S ribosomal subunit. Forms a loose heterodimer with protein S19. Forms two bridges to the 50S subunit in the 70S ribosome.

Its function is as follows. Located at the top of the head of the 30S subunit, it contacts several helices of the 16S rRNA. In the 70S ribosome it contacts the 23S rRNA (bridge B1a) and protein L5 of the 50S subunit (bridge B1b), connecting the 2 subunits; these bridges are implicated in subunit movement. Contacts the tRNAs in the A and P-sites. The polypeptide is Small ribosomal subunit protein uS13 (Flavobacterium psychrophilum (strain ATCC 49511 / DSM 21280 / CIP 103535 / JIP02/86)).